The primary structure comprises 166 residues: MRRAVCPGSFDPIHNGHLEVIARAAGLFDEVIVAVSTNYAKKYRFSLEDRMEMARETLASLRGIIVEPMGEGLLAEYCRHRGVSAIVKGLRSSSDFDYELPMATMNRQLTGVETVFLPAEAHYVHLSSTLIKEVNVLGGDISEYVPKSVLKRLLAGEPPTEPSRKG.

Residue Ser-9 participates in substrate binding. Residues 9–10 (SF) and His-17 contribute to the ATP site. Lys-41, Leu-74, and Lys-88 together coordinate substrate. Residues 89-91 (GLR), Glu-99, and 123-129 (YVHLSST) contribute to the ATP site.

This sequence belongs to the bacterial CoaD family. As to quaternary structure, homohexamer. Mg(2+) is required as a cofactor.

It is found in the cytoplasm. It catalyses the reaction (R)-4'-phosphopantetheine + ATP + H(+) = 3'-dephospho-CoA + diphosphate. It participates in cofactor biosynthesis; coenzyme A biosynthesis; CoA from (R)-pantothenate: step 4/5. In terms of biological role, reversibly transfers an adenylyl group from ATP to 4'-phosphopantetheine, yielding dephospho-CoA (dPCoA) and pyrophosphate. The chain is Phosphopantetheine adenylyltransferase from Paenarthrobacter aurescens (strain TC1).